Reading from the N-terminus, the 366-residue chain is Beta-1,3-glucan-binding protein (366 aa).

The N-terminal stretch at 1 to 17 (MKGFVASVVLLACGALA) is a signal peptide. Positions 18 to 364 (ADIVEPEDCT…YVRVWKMEST (347 aa)) constitute a GH16 domain. Residue Asn-66 is glycosylated (N-linked (GlcNAc...) asparagine).

It belongs to the glycosyl hydrolase 16 family. In terms of tissue distribution, constitutively expressed in hemocytes.

It localises to the secreted. In terms of biological role, binds to beta-1,3-glucan. May play a role in recognition of microorganisms and in activation of the prophenoloxidase cascade. This chain is Beta-1,3-glucan-binding protein, found in Penaeus monodon (Giant tiger prawn).